A 1790-amino-acid chain; its full sequence is Atrochrysone carboxylic acid synthase (1790 aa).

The interval 27–265 is N-terminal acylcarrier protein transacylase domain (SAT); sequence RDLQDLFRQA…ALPVYGGLCH (239 aa). One can recognise a Ketosynthase family 3 (KS3) domain in the interval 399-833; that stretch reads QSKLAIVGMS…GGNTTMILED (435 aa). Active-site for beta-ketoacyl synthase activity residues include Cys-572, His-708, and His-751. Residues 934–1254 are malonyl-CoA:ACP transacylase (MAT) domain; it reads FSFTGQGASH…IAQLYTVGVD (321 aa). An N-terminal hotdog fold region spans residues 1323-1475; sequence QQIVEQVFDT…SLTHLVRDRI (153 aa). The 312-residue stretch at 1323–1634 folds into the PKS/mFAS DH domain; it reads QQIVEQVFDT…FHRYRRILLE (312 aa). The active-site Proton acceptor; for dehydratase activity is His-1357. Residues 1357–1631 form a product template (PT) domain region; that stretch reads HRMNDCGVAT…GIEFHRYRRI (275 aa). The C-terminal hotdog fold stretch occupies residues 1487–1634; that stretch reads ANRLSHNMAY…FHRYRRILLE (148 aa). The active-site Proton donor; for dehydratase activity is the Asp-1545. Positions 1644–1667 are disordered; sequence NLDDTTETKDISSSTQHSVPVSRQ. Positions 1654-1664 are enriched in polar residues; sequence ISSSTQHSVPV. In terms of domain architecture, Carrier spans 1715-1789; it reads SSITNRAMQL…DLRNWLEETY (75 aa). The residue at position 1749 (Ser-1749) is an O-(pantetheine 4'-phosphoryl)serine.

It catalyses the reaction holo-[ACP] + 8 malonyl-CoA + 8 H(+) = atrochrysone carboxyl-[ACP] + 8 CO2 + 8 CoA + 2 H2O. Its pathway is pigment biosynthesis. Functionally, non-reducing polyketide synthase; part of the gene cluster that mediates the biosynthesis of the bianthraquinone cladofulvin, a conidial pigment not required for virulence but that plays a role in fitness and resistance to environmental stresses including UV light and low-temperature stress. The pathway begins with the synthesis of atrochrysone thioester by the polyketide synthase (PKS) claG. The atrochrysone carboxyl ACP thioesterase claF then breaks the thioester bond and releases the atrochrysone carboxylic acid from claG. This compound is decarboxylated by claH to yield emodin, which is further converted to chrysophanol hydroquinone by the reductase claC and the dehydratase claB. The cytochrome P450 monooxygenase claM then catalyzes the dimerization of nataloe-emodin to cladofulvin. The chain is Atrochrysone carboxylic acid synthase from Passalora fulva (Tomato leaf mold).